A 900-amino-acid chain; its full sequence is MMMVMQPEGLGAGEGPFSGGGGGEYMEQEEDWDRDLLLDPAWEKQQRKTFTAWCNSHLRKAGTQIENIEEDFRNGLKLMLLLEVISGERLPRPDKGKMRFHKIANVNKALDFIASKGVKLVSIGAEEIVDGNLKMTLGMIWTIILRFAIQDISVEETSAKEGLLLWCQRKTAPYRNVNVQNFHTSWKDGLALCALIHRHRPDLIDYAKLRKDDPIGNLNTAFEVAEKYLDIPKMLDAEDIVNTPKPDEKAIMTYVSCFYHAFAGAEQAETAANRICKVLAVNQENEKLMEEYEKLASELLEWIRRTVPWLENRVGEPSMSAMQRKLEDFRDYRRLHKPPRVQEKCQLEINFNTLQTKLRLSHRPAFMPSEGKLVSDIANAWRGLEQVEKGYEDWLLSEIRRLQRLQHLAEKFQQKASLHEAWTRGKEEMLNQHDYESASLQEVRALLRRHEAFESDLAAHQDRVEHIAALAQELNELDYHEAASVNSRCQAICDQWDNLGTLTQKRRDALERMEKLLETIDQLQLEFARRAAPFNNWLDGAIEDLQDVWLVHSVEETQSLLTAHEQFKATLPEADRERGAILGIQGEIQKICQTYGLRPKSGNPYITLSSQDINNKWDTVRKLVPSRDQTLQEELARQQVNERLRRQFAAQANAIGPWIQGKVEEVGRLAAGLAGSLEEQMAGLRQQEQNIINYKSNIDRLEGDHQLLQESLVFDNKHTVYSMEHIRVGWEQLLTSIARTINEVENQVLTRDAKGLSQEQLNEFRASFNHFDRKRNGMMEPDDFRACLISMGYDLGEVEFARIMTMVDPNAAGVVTFQAFIDFMTRETAETDTAEQVVASFKILAGDKNYITPEELRRELPAEQAEYCIRRMAPYKGSGAPSGALDYVAFSSALYGESDL.

Methionine 1 is subject to N-acetylmethionine. Residues 1-26 (MMMVMQPEGLGAGEGPFSGGGGGEYM) are disordered. Residues 1–260 (MMMVMQPEGL…IMTYVSCFYH (260 aa)) are actin-binding. The span at 10–24 (LGAGEGPFSGGGGGE) shows a compositional bias: gly residues. 2 consecutive Calponin-homology (CH) domains span residues 44 to 148 (KQQR…LRFA) and 157 to 263 (TSAK…HAFA). 4 Spectrin repeats span residues 287–397 (KLME…WLLS), 407–512 (HLAE…ALER), 522–633 (QLQL…TLQE), and 643–746 (RLRR…EVEN). 2 EF-hand domains span residues 759–794 (EQLNEFRASFNHFDRKRNGMMEPDDFRACLISMGYD) and 795–830 (LGEVEFARIMTMVDPNAAGVVTFQAFIDFMTRETAE). Aspartate 772, asparagine 776, methionine 778, aspartate 783, aspartate 808, and asparagine 810 together coordinate Ca(2+).

It belongs to the alpha-actinin family. Homodimer; antiparallel. Also forms heterodimers with ACTN2. Interacts with MYOZ1. Expression restricted to skeletal muscle fast (type 2) fibers (at protein level).

Its function is as follows. F-actin cross-linking protein which is thought to anchor actin to a variety of intracellular structures. This is a bundling protein. The sequence is that of Alpha-actinin-3 (Actn3) from Mus musculus (Mouse).